A 473-amino-acid chain; its full sequence is ATP synthase subunit beta (473 aa).

158 to 165 is an ATP binding site; it reads GGAGVGKT.

The protein belongs to the ATPase alpha/beta chains family. In terms of assembly, F-type ATPases have 2 components, CF(1) - the catalytic core - and CF(0) - the membrane proton channel. CF(1) has five subunits: alpha(3), beta(3), gamma(1), delta(1), epsilon(1). CF(0) has three main subunits: a(1), b(2) and c(9-12). The alpha and beta chains form an alternating ring which encloses part of the gamma chain. CF(1) is attached to CF(0) by a central stalk formed by the gamma and epsilon chains, while a peripheral stalk is formed by the delta and b chains.

It localises to the cell membrane. It carries out the reaction ATP + H2O + 4 H(+)(in) = ADP + phosphate + 5 H(+)(out). Functionally, produces ATP from ADP in the presence of a proton gradient across the membrane. The catalytic sites are hosted primarily by the beta subunits. In Geobacillus thermoleovorans (Bacillus thermoleovorans), this protein is ATP synthase subunit beta.